The primary structure comprises 114 residues: Immunoglobulin kappa variable 6D-21 (114 aa).

Positions 1 to 19 (MSPSQLIGFLLLWVPASRG) are cleaved as a signal peptide. Residues 20-42 (EIVLTQSPDFQSVTPKEKVTITC) form a framework-1 region. The Ig-like domain maps to 20–114 (EIVLTQSPDF…YYCHQSSSLP (95 aa)). Cysteine 42 and cysteine 107 form a disulfide bridge. The interval 43-53 (RASQSIGSSLH) is complementarity-determining-1. The segment at 54-68 (WYQQKPDQSPKLLIK) is framework-2. Positions 69-75 (YASQSIS) are complementarity-determining-2. A framework-3 region spans residues 76 to 107 (GVPSRFSGSGSGTDFTLTINSLEAEDAAAYYC). Residues 108–114 (HQSSSLP) are complementarity-determining-3.

Immunoglobulins are composed of two identical heavy chains and two identical light chains; disulfide-linked.

It localises to the secreted. The protein resides in the cell membrane. Functionally, v region of the variable domain of immunoglobulin light chains that participates in the antigen recognition. Immunoglobulins, also known as antibodies, are membrane-bound or secreted glycoproteins produced by B lymphocytes. In the recognition phase of humoral immunity, the membrane-bound immunoglobulins serve as receptors which, upon binding of a specific antigen, trigger the clonal expansion and differentiation of B lymphocytes into immunoglobulins-secreting plasma cells. Secreted immunoglobulins mediate the effector phase of humoral immunity, which results in the elimination of bound antigens. The antigen binding site is formed by the variable domain of one heavy chain, together with that of its associated light chain. Thus, each immunoglobulin has two antigen binding sites with remarkable affinity for a particular antigen. The variable domains are assembled by a process called V-(D)-J rearrangement and can then be subjected to somatic hypermutations which, after exposure to antigen and selection, allow affinity maturation for a particular antigen. This Homo sapiens (Human) protein is Immunoglobulin kappa variable 6D-21.